Here is a 431-residue protein sequence, read N- to C-terminus: Growth-regulating factor 9 (431 aa).

The region spanning 24–59 (WMKAAQLMEFRMQALVYRYIEAGLRVPHHLVVPIWN) is the QLQ domain. WRC domains follow at residues 89 to 133 (ETEP…LVES) and 307 to 351 (DNEP…VDTT). 4 consecutive short sequence motifs (bipartite nuclear localization signal) follow at residues 94 to 104 (RCRRTDGKKWR), 122 to 129 (RGRKRSRK), 312 to 322 (RCRRTDGKKWR), and 340 to 345 (RGMKKK).

The protein belongs to the GRF family. Interacts with GIF1. In terms of tissue distribution, detected in the shoot apical meristem (SAM) and in young leaf primordium.

The protein localises to the nucleus. Functionally, transcription activator that plays a role in the regulation of cell expansion in leaf and cotyledons tissues. Component of a network formed by miR396, the GRFs and their interacting factors (GIFs) acting in the regulation of meristem function, at least partially through the control of cell proliferation. This chain is Growth-regulating factor 9 (GRF9), found in Arabidopsis thaliana (Mouse-ear cress).